We begin with the raw amino-acid sequence, 88 residues long: U1-hexatoxin-Iw1d (88 aa).

An N-terminal signal peptide occupies residues leucine 1–alanine 17. Glutamine 18 carries the post-translational modification Pyrrolidone carboxylic acid. 5 disulfide bridges follow: cysteine 20–cysteine 31, cysteine 25–cysteine 39, cysteine 30–cysteine 65, cysteine 49–cysteine 73, and cysteine 67–cysteine 80. Residues arginine 86–glutamate 88 constitute a propeptide that is removed on maturation.

Belongs to the MIT-like AcTx family. In terms of tissue distribution, expressed by the venom gland.

Its subcellular location is the secreted. This Illawarra wisharti (Illawarra funnel-web spider) protein is U1-hexatoxin-Iw1d.